We begin with the raw amino-acid sequence, 158 residues long: Large ribosomal subunit protein uL11 (158 aa).

This sequence belongs to the universal ribosomal protein uL11 family. In terms of assembly, part of the ribosomal stalk of the 50S ribosomal subunit. Interacts with L10 and the large rRNA to form the base of the stalk. L10 forms an elongated spine to which L12 dimers bind in a sequential fashion forming a multimeric L10(L12)X complex.

Forms part of the ribosomal stalk which helps the ribosome interact with GTP-bound translation factors. The protein is Large ribosomal subunit protein uL11 of Methanospirillum hungatei JF-1 (strain ATCC 27890 / DSM 864 / NBRC 100397 / JF-1).